A 129-amino-acid chain; its full sequence is Small ribosomal subunit protein uS11 (129 aa).

This sequence belongs to the universal ribosomal protein uS11 family. As to quaternary structure, part of the 30S ribosomal subunit. Interacts with proteins S7 and S18. Binds to IF-3.

Its function is as follows. Located on the platform of the 30S subunit, it bridges several disparate RNA helices of the 16S rRNA. Forms part of the Shine-Dalgarno cleft in the 70S ribosome. The protein is Small ribosomal subunit protein uS11 of Cereibacter sphaeroides (strain ATCC 17025 / ATH 2.4.3) (Rhodobacter sphaeroides).